The chain runs to 89 residues: Cell division topological specificity factor (89 aa).

Belongs to the MinE family.

Functionally, prevents the cell division inhibition by proteins MinC and MinD at internal division sites while permitting inhibition at polar sites. This ensures cell division at the proper site by restricting the formation of a division septum at the midpoint of the long axis of the cell. The chain is Cell division topological specificity factor from Klebsiella pneumoniae subsp. pneumoniae (strain ATCC 700721 / MGH 78578).